We begin with the raw amino-acid sequence, 350 residues long: NAD-dependent protein deacetylase sirtuin-2 (350 aa).

The Nuclear export signal motif lies at 4–14; it reads LRNLFTQTLGL. The residue at position 16 (serine 16) is a Phosphoserine. One can recognise a Deacetylase sirtuin-type domain in the interval 20 to 301; sequence RLLDELTLEG…LALADLLGWK (282 aa). NAD(+)-binding positions include 48–52 and 58–60; these read AGIST and DFR. Serine 63 is modified (phosphoserine). 130-133 contributes to the NAD(+) binding site; it reads QNID. The Proton acceptor role is filled by histidine 150. 2 residues coordinate Zn(2+): cysteine 158 and cysteine 163. The residue at position 170 (serine 170) is a Phosphoserine. Residues cysteine 184 and cysteine 187 each contribute to the Zn(2+) site. NAD(+) is bound by residues 225–226, 249–251, and cysteine 287; these read TS and NKE. A disordered region spans residues 312 to 350; sequence ANIDAQSGSQASNPSATVSPRKSPPPAKEAARTKEKEEH. Polar residues predominate over residues 315-331; that stretch reads DAQSGSQASNPSATVSP. Phosphoserine is present on residues serine 330 and serine 334. Basic and acidic residues predominate over residues 340-350; the sequence is EAARTKEKEEH.

The protein belongs to the sirtuin family. Class I subfamily. As to quaternary structure, interacts with CDC20, FOXO3 and FZR1. Associates with microtubules in primary cortical mature neurons. Homotrimer. Interacts (via both phosphorylated, unphosphorylated, active or inactive forms) with HDAC6; the interaction is necessary for the complex to interact with alpha-tubulin, suggesting that these proteins belong to a large complex that deacetylates the cytoskeleton. Interacts with FOXO1; the interaction is disrupted upon serum-starvation or oxidative stress, leading to increased level of acetylated FOXO1 and induction of autophagy. Interacts with RELA; the interaction occurs in the cytoplasm and is increased in a TNF-alpha-dependent manner. Interacts with HOXA10; the interaction is direct. Interacts with YWHAB and YWHAG; the interactions occur in a AKT-dependent manner and increase SIRT2-dependent TP53 deacetylation. Interacts with MAPK1/ERK2 and MAPK3/ERK1; the interactions increase SIRT2 stability and deacetylation activity. Interacts (phosphorylated form) with KMT5A isoform 2; the interaction is direct, stimulates KMT5A-mediated methyltransferase activity on histone at 'Lys-20' (H4K20me1) and is increased in a H(2)O(2)-induced oxidative stress-dependent manner. Interacts with G6PD; the interaction is enhanced by H(2)O(2) treatment. Interacts with a G1/S-specific cyclin E-CDK2 complex. Interacts with AURKA, CDK5R1 (p35 form) and CDK5 and HIF1A. Interacts with the tRNA ligase SARS1; recruited to the VEGFA promoter via interaction with SARS1. Interacts with BEX4; negatively regulates alpha-tubulin deacetylation by SIRT2. Requires Zn(2+) as cofactor. Phosphorylated at phosphoserine and phosphothreonine. Phosphorylated at Ser-330 by a mitotic kinase CDK1/cyclin B at the G2/M transition; phosphorylation regulates the delay in cell-cycle progression. Phosphorylated at Ser-330 by a mitotic kinase G1/S-specific cyclin E/Cdk2 complex; phosphorylation inactivates SIRT2-mediated alpha-tubulin deacetylation and thereby negatively regulates cell adhesion, cell migration and neurite outgrowth during neuronal differentiation. Phosphorylated by cyclin A/Cdk2 and p35-Cdk5 complexes and to a lesser extent by the cyclin D3/Cdk4 and cyclin B/Cdk1, in vitro. Dephosphorylated at Ser-330 by CDC14A and CDC14B around early anaphase. Post-translationally, acetylated by EP300; acetylation leads both to the decreased of SIRT2-mediated alpha-tubulin deacetylase activity and SIRT2-mediated down-regulation of TP53 transcriptional activity. In terms of processing, ubiquitinated. Expressed in the cerebellum, cerebral cortex and cervival spinal cord. Expressed in Purkinje cells, oligodendrocytes and Schwann cells (at protein level). Expressed in the central nervous system (CNS).

It is found in the nucleus. Its subcellular location is the cytoplasm. The protein localises to the perinuclear region. The protein resides in the cytoskeleton. It localises to the microtubule organizing center. It is found in the centrosome. Its subcellular location is the centriole. The protein localises to the spindle. The protein resides in the midbody. It localises to the chromosome. It is found in the perikaryon. Its subcellular location is the cell projection. The protein localises to the growth cone. The protein resides in the myelin membrane. The catalysed reaction is N(6)-acetyl-L-lysyl-[protein] + NAD(+) + H2O = 2''-O-acetyl-ADP-D-ribose + nicotinamide + L-lysyl-[protein]. It catalyses the reaction N(6)-tetradecanoyl-L-lysyl-[protein] + NAD(+) + H2O = 2''-O-tetradecanoyl-ADP-D-ribose + nicotinamide + L-lysyl-[protein]. The enzyme catalyses N(6)-hexadecanoyl-L-lysyl-[protein] + NAD(+) + H2O = 2''-O-hexadecanoyl-ADP-D-ribose + nicotinamide + L-lysyl-[protein]. Inhibited by Sirtinol, A3 and M15 small molecules. Inhibited by nicotinamide. Inhibited by a macrocyclic peptide inhibitor S2iL5. Inhibited by EP300-induced acetylation. Its function is as follows. NAD-dependent protein deacetylase, which deacetylates internal lysines on histone and alpha-tubulin as well as many other proteins such as key transcription factors. Participates in the modulation of multiple and diverse biological processes such as cell cycle control, genomic integrity, microtubule dynamics, cell differentiation, metabolic networks, and autophagy. Plays a major role in the control of cell cycle progression and genomic stability. Functions in the antephase checkpoint preventing precocious mitotic entry in response to microtubule stress agents, and hence allowing proper inheritance of chromosomes. Positively regulates the anaphase promoting complex/cyclosome (APC/C) ubiquitin ligase complex activity by deacetylating CDC20 and FZR1, then allowing progression through mitosis. Associates both with chromatin at transcriptional start sites (TSSs) and enhancers of active genes. Plays a role in cell cycle and chromatin compaction through epigenetic modulation of the regulation of histone H4 'Lys-20' methylation (H4K20me1) during early mitosis. Specifically deacetylates histone H4 at 'Lys-16' (H4K16ac) between the G2/M transition and metaphase enabling H4K20me1 deposition by KMT5A leading to ulterior levels of H4K20me2 and H4K20me3 deposition throughout cell cycle, and mitotic S-phase progression. Deacetylates KMT5A modulating KMT5A chromatin localization during the mitotic stress response. Also deacetylates histone H3 at 'Lys-57' (H3K56ac) during the mitotic G2/M transition. During oocyte meiosis progression, may deacetylate histone H4 at 'Lys-16' (H4K16ac) and alpha-tubulin, regulating spindle assembly and chromosome alignment by influencing microtubule dynamics and kinetochore function. Deacetylates histone H4 at 'Lys-16' (H4K16ac) at the VEGFA promoter and thereby contributes to regulate expression of VEGFA, a key regulator of angiogenesis. Deacetylates alpha-tubulin at 'Lys-40' and hence controls neuronal motility, oligodendroglial cell arbor projection processes and proliferation of non-neuronal cells. Phosphorylation at Ser-368 by a G1/S-specific cyclin E-CDK2 complex inactivates SIRT2-mediated alpha-tubulin deacetylation, negatively regulating cell adhesion, cell migration and neurite outgrowth during neuronal differentiation. Deacetylates PARD3 and participates in the regulation of Schwann cell peripheral myelination formation during early postnatal development and during postinjury remyelination. Involved in several cellular metabolic pathways. Plays a role in the regulation of blood glucose homeostasis by deacetylating and stabilizing phosphoenolpyruvate carboxykinase PCK1 activity in response to low nutrient availability. Acts as a key regulator in the pentose phosphate pathway (PPP) by deacetylating and activating the glucose-6-phosphate G6PD enzyme, and therefore, stimulates the production of cytosolic NADPH to counteract oxidative damage. Maintains energy homeostasis in response to nutrient deprivation as well as energy expenditure by inhibiting adipogenesis and promoting lipolysis. Attenuates adipocyte differentiation by deacetylating and promoting FOXO1 interaction to PPARG and subsequent repression of PPARG-dependent transcriptional activity. Plays a role in the regulation of lysosome-mediated degradation of protein aggregates by autophagy in neuronal cells. Deacetylates FOXO1 in response to oxidative stress or serum deprivation, thereby negatively regulating FOXO1-mediated autophagy. Deacetylates a broad range of transcription factors and co-regulators regulating target gene expression. Deacetylates transcriptional factor FOXO3 stimulating the ubiquitin ligase SCF(SKP2)-mediated FOXO3 ubiquitination and degradation. Deacetylates HIF1A and therefore promotes HIF1A degradation and inhibition of HIF1A transcriptional activity in tumor cells in response to hypoxia. Deacetylates RELA in the cytoplasm inhibiting NF-kappaB-dependent transcription activation upon TNF-alpha stimulation. Inhibits transcriptional activation by deacetylating p53/TP53 and EP300. Also deacetylates EIF5A. Functions as a negative regulator on oxidative stress-tolerance in response to anoxia-reoxygenation conditions. Plays a role as tumor suppressor. In addition to protein deacetylase activity, also has activity toward long-chain fatty acyl groups and mediates protein-lysine demyristoylation and depalmitoylation of target proteins, such as ARF6 and KRAS, thereby regulating their association with membranes. This chain is NAD-dependent protein deacetylase sirtuin-2 (Sirt2), found in Rattus norvegicus (Rat).